The primary structure comprises 774 residues: Ion-translocating oxidoreductase complex subunit C (774 aa).

2 consecutive 4Fe-4S ferredoxin-type domains span residues 368–398 (ELTSSDNEMACIRCGQCAEACPVSLLPQQLQ) and 408–437 (KCEELDLKDCIECGACAYVCPSEIPLVQYY). [4Fe-4S] cluster-binding residues include C378, C381, C384, C388, C417, C420, C423, and C427. Over residues 459-490 (ARFEEKKARMERDKAERENRFKQAAEDRRKEM) the composition is skewed to basic and acidic residues. 2 disordered regions span residues 459–496 (ARFEEKKARMERDKAERENRFKQAAEDRRKEMQQQGGS) and 533–774 (AKQA…EEKD). The segment covering 533–545 (AKQAEAAQSGASE) has biased composition (low complexity). Basic and acidic residues predominate over residues 550–572 (EMAKLREERKRQARERKAQKGEV). The span at 605–618 (TESAAQPAQATPSS) shows a compositional bias: low complexity. 4 stretches are compositionally biased toward polar residues: residues 645–658 (TESTAQPAQATPSS), 686–698 (ESAAQPTQATPSS), 725–738 (TESAAQPTQATPSS), and 762–774 (QQSSSNLNAEEKD).

The protein belongs to the 4Fe4S bacterial-type ferredoxin family. RnfC subfamily. As to quaternary structure, the complex is composed of six subunits: RnfA, RnfB, RnfC, RnfD, RnfE and RnfG. Requires [4Fe-4S] cluster as cofactor.

The protein resides in the cell inner membrane. Its function is as follows. Part of a membrane-bound complex that couples electron transfer with translocation of ions across the membrane. The chain is Ion-translocating oxidoreductase complex subunit C from Vibrio cholerae serotype O1 (strain ATCC 39315 / El Tor Inaba N16961).